The chain runs to 582 residues: MAPPMPLLSVRGSDGIQLVLGPPKFTDSETFQRDPSKNCKVSRFTKDGKLFGWCNGEVINIVNCSDSKLLHTLDLPKVVSLEFSPKNTILATWQTYTTGKDGTAGTPNLQLYDLKSGKISNVKSFIQKKMENWSPHWSDDENICARNVNNEVHFFENNNFDTIANKLHLQKVSDFELSPGEQPCKVAVYVPGSKGAPSFVRLYQYPNFSGPNSALANKSFFKADRVAMLWNSKATAVLVTASTDVDKTGASYYGEQTLHYIAVNGESAVVQLPKNGPIYDVTWNKNATEFCVVYGFMPAKATVFNLKCDPIFDFGTGPRNAAFYSPQGHILVLAGFGNLRGQMEVWDVKKYKLISKPTASDATFFSWCPNGEHIITATCSPRLRVGNGYKIWHYTGTLLHKYDVPANSELWQVSWQPFPDGVFPAKAIVYQAVPGDLPTQESKPAEAYRPPALRNKPVSSYKLHEDEPPQSMMPQSTEKPMSKTALKNQKKREAKKAAKQESKMDEPAESDSTNVQNNTPVAVNTGDPETDKKIKNLKKKLKAIEQLKELQSSGKTLEKNQIEKIQKEDILLKELEDLEIGV.

4 WD repeats span residues 21–63 (GPPK…NIVN), 73–124 (LDLP…NVKS), 273–314 (PKNG…IFDF), and 358–402 (TASD…LHKY). A disordered region spans residues 436-533 (DLPTQESKPA…NTGDPETDKK (98 aa)). The stretch at 482 to 580 (SKTALKNQKK…LLKELEDLEI (99 aa)) forms a coiled coil. Over residues 495-506 (KKAAKQESKMDE) the composition is skewed to basic and acidic residues. Residues 510–522 (SDSTNVQNNTPVA) show a composition bias toward polar residues.

This sequence belongs to the WD repeat EIF2A family.

In terms of biological role, functions in the early steps of protein synthesis of a small number of specific mRNAs. Acts by directing the binding of methionyl-tRNAi to 40S ribosomal subunits. In contrast to the eIF-2 complex, it binds methionyl-tRNAi to 40S subunits in a codon-dependent manner, whereas the eIF-2 complex binds methionyl-tRNAi to 40S subunits in a GTP-dependent manner. This Xenopus laevis (African clawed frog) protein is Eukaryotic translation initiation factor 2A (eif2a).